Here is a 304-residue protein sequence, read N- to C-terminus: Uricase (304 aa).

Ala-2 is subject to N-acetylalanine. Residues Lys-10 and Lys-23 each carry the N6-acetyllysine; alternate modification. 2 positions are modified to N6-succinyllysine; alternate: Lys-10 and Lys-23. The Charge relay system role is filled by Lys-23. N6-acetyllysine occurs at positions 27 and 36. Phosphoserine is present on residues Ser-39 and Ser-63. The active-site Charge relay system is Thr-68. The urate site is built by Thr-68 and Asp-69. Residues Lys-118, Lys-122, and Lys-164 each carry the N6-acetyllysine modification. Residue Phe-170 coordinates urate. Residues Lys-175 and Lys-185 each carry the N6-acetyllysine modification. Residue Arg-187 coordinates urate. N6-acetyllysine; alternate occurs at positions 221 and 228. Residues Lys-221 and Lys-228 each carry the N6-succinyllysine; alternate modification. Position 232 is a phosphoserine (Ser-232). 3 residues coordinate urate: Val-235, Gln-236, and Asn-262. The active-site Charge relay system is His-264. Lys-278 is modified (N6-acetyllysine). The residue at position 289 (Tyr-289) is a Phosphotyrosine. The Microbody targeting signal motif lies at 302-304; that stretch reads SRL.

This sequence belongs to the uricase family. In terms of assembly, homotetramer.

It localises to the peroxisome. It catalyses the reaction urate + O2 + H2O = 5-hydroxyisourate + H2O2. It participates in purine metabolism; urate degradation; (S)-allantoin from urate: step 1/3. Functionally, catalyzes the oxidation of uric acid to 5-hydroxyisourate, which is further processed to form (S)-allantoin. The sequence is that of Uricase (UOX) from Sus scrofa (Pig).